Reading from the N-terminus, the 204-residue chain is Probable nicotinate-nucleotide adenylyltransferase (204 aa).

Belongs to the NadD family.

The catalysed reaction is nicotinate beta-D-ribonucleotide + ATP + H(+) = deamido-NAD(+) + diphosphate. It participates in cofactor biosynthesis; NAD(+) biosynthesis; deamido-NAD(+) from nicotinate D-ribonucleotide: step 1/1. Its function is as follows. Catalyzes the reversible adenylation of nicotinate mononucleotide (NaMN) to nicotinic acid adenine dinucleotide (NaAD). The chain is Probable nicotinate-nucleotide adenylyltransferase from Dehalococcoides mccartyi (strain ATCC BAA-2100 / JCM 16839 / KCTC 5957 / BAV1).